Consider the following 1005-residue polypeptide: Pikachurin (1005 aa).

An N-terminal signal peptide occupies residues Met-1–Ser-24. 2 consecutive Fibronectin type-III domains span residues Pro-37–Gln-136 and Ala-144–Pro-239. N-linked (GlcNAc...) asparagine glycosylation occurs at Asn-47. Residues Pro-281 to Gly-328 form a disordered region. A compositionally biased stretch (polar residues) spans Ala-305–Glu-314. The region spanning Phe-339 to Ser-377 is the EGF-like 1 domain. 11 disulfides stabilise this stretch: Cys-343-Cys-354, Cys-348-Cys-365, Cys-367-Cys-376, Cys-530-Cys-560, Cys-565-Cys-576, Cys-570-Cys-586, Cys-588-Cys-597, Cys-784-Cys-795, Cys-789-Cys-804, Cys-806-Cys-815, and Cys-975-Cys-1002. A Laminin G-like 1 domain is found at Ile-382–Cys-560. EGF-like domains are found at residues Ser-561–Glu-598 and Ala-780–Gln-816. The Laminin G-like 2 domain maps to Ile-605–Cys-784. In terms of domain architecture, Laminin G-like 3 spans Ile-823–Cys-1002.

In terms of assembly, interacts with DAG1 alpha-dystroglycan. Interacts with GPR158 and GPR179; transsynaptic interaction is required for synaptic organization of photoreceptor cells. Post-translationally, O-glycosylated; contains chondroitin sulfate and heparan sulfate.

The protein localises to the secreted. It is found in the extracellular space. Its subcellular location is the extracellular matrix. It localises to the synaptic cleft. The protein resides in the presynaptic active zone. Involved in both the retinal photoreceptor ribbon synapse formation and physiological functions of visual perception. Plays a key role in the synaptic organization of photoreceptors by mediating transsynaptic interaction between alpha-dystroglycan and GPR179 on the postsynaptic membrane. Necessary for proper bipolar dendritic tip apposition to the photoreceptor ribbon synapse. Promotes matrix assembly and cell adhesiveness. This chain is Pikachurin (Egflam), found in Rattus norvegicus (Rat).